The primary structure comprises 415 residues: MITVLVLNAGSSSLKASLYRLAPEIGATAVRPPAPLWQGLLDWGQNPTVARLKVTTANQHYEANLTHPEGGIAGLRDWLKSLLDTLTSGQTKLLENLAEITIIGHRVVHGGSRYQAPVRVDAQVKAAISELSEYAPLHNPANLLGMELMADICPQTPQVAVFDTAFHAQLPAVARTYAIPYELTTAGIQRYGFHGISHQYVSERAATLLQRPLAELHLITCHLGNGCSLTAVKGGVSVETTMGFTPTAGVMMGTRCGDIDPGILLYLLRRGWTVAELDRLVNRQSGLLGVSGVSNDLRQILAAIDQGNPQAQLAYDCFIYSLQRGIASLLPALGRLDGLVFTAGIGENAPGVRRDICRGLGWLGIELDSTANEKGQGDRNIALPTAPVSVLVVQTQEDWAIARACGQLLSLPISS.

A Mg(2+)-binding site is contributed by Asn8. Residue Lys15 coordinates ATP. Arg106 is a substrate binding site. Asp163 (proton donor/acceptor) is an active-site residue. Residues 222–226 (HLGNG), 296–298 (DLR), and 344–348 (GIGEN) contribute to the ATP site. Position 397 (Glu397) interacts with Mg(2+).

Belongs to the acetokinase family. In terms of assembly, homodimer. It depends on Mg(2+) as a cofactor. The cofactor is Mn(2+).

It is found in the cytoplasm. It carries out the reaction acetate + ATP = acetyl phosphate + ADP. Its pathway is metabolic intermediate biosynthesis; acetyl-CoA biosynthesis; acetyl-CoA from acetate: step 1/2. Its function is as follows. Catalyzes the formation of acetyl phosphate from acetate and ATP. Can also catalyze the reverse reaction. The polypeptide is Acetate kinase (Thermosynechococcus vestitus (strain NIES-2133 / IAM M-273 / BP-1)).